Reading from the N-terminus, the 80-residue chain is UPF0270 protein VFMJ11_0205 (80 aa).

Belongs to the UPF0270 family.

This is UPF0270 protein VFMJ11_0205 from Aliivibrio fischeri (strain MJ11) (Vibrio fischeri).